Consider the following 542-residue polypeptide: Probable spastin homolog spas-1 (542 aa).

Residues 29-66 (RAAIEMDELTKQNGTINEKLQTAELYKQARQMLKEANE) adopt a coiled-coil conformation. Residues 131-177 (ATVPGDKKVSKVKQTEKAPHVCSRGDRCGAHQPPPEKKSTPLKPVNQ) are disordered. Residues 135-169 (GDKKVSKVKQTEKAPHVCSRGDRCGAHQPPPEKKS) show a composition bias toward basic and acidic residues. ATP is bound at residue 309–316 (GPPGNGKT).

It belongs to the AAA ATPase family. Spastin subfamily. Homohexamer. The homohexamer is stabilized by ATP-binding. The homohexamer may adopt a ring conformation through which microtubules pass prior to being severed. Interacts with microtubules.

Its subcellular location is the cytoplasm. It is found in the cytoskeleton. The protein localises to the perinuclear region. The enzyme catalyses n ATP + n H2O + a microtubule = n ADP + n phosphate + (n+1) alpha/beta tubulin heterodimers.. Severs microtubules, probably in an ATP-dependent fashion. This is Probable spastin homolog spas-1 (spas-1) from Caenorhabditis briggsae.